We begin with the raw amino-acid sequence, 217 residues long: Small ribosomal subunit protein uS3 (217 aa).

A KH type-2 domain is found at 40-110; the sequence is IRDLINKGFN…EVYINIHEVR (71 aa).

It belongs to the universal ribosomal protein uS3 family. Part of the 30S ribosomal subunit. Forms a tight complex with proteins S10 and S14.

Binds the lower part of the 30S subunit head. Binds mRNA in the 70S ribosome, positioning it for translation. This is Small ribosomal subunit protein uS3 from Rickettsia akari (strain Hartford).